Consider the following 222-residue polypeptide: Ribosomal RNA small subunit methyltransferase G (222 aa).

Residues G84, F89, 141–142 (VE), and R154 contribute to the S-adenosyl-L-methionine site.

It belongs to the methyltransferase superfamily. RNA methyltransferase RsmG family.

It localises to the cytoplasm. It catalyses the reaction guanosine(527) in 16S rRNA + S-adenosyl-L-methionine = N(7)-methylguanosine(527) in 16S rRNA + S-adenosyl-L-homocysteine. Its function is as follows. Specifically methylates the N7 position of guanine in position 527 of 16S rRNA. This Bradyrhizobium sp. (strain BTAi1 / ATCC BAA-1182) protein is Ribosomal RNA small subunit methyltransferase G.